The sequence spans 44 residues: CHHEGLPCTSGDGCCGMECCGGVCSSHCGNGRRRQVPLKSFGQR.

4 cysteine pairs are disulfide-bonded: Cys1/Cys15, Cys8/Cys20, Cys14/Cys24, and Cys19/Cys28. Asn30 is modified (asparagine amide). A propeptide spanning residues 35 to 44 (QVPLKSFGQR) is cleaved from the precursor.

Belongs to the conotoxin I2 superfamily. Expressed by the venom duct.

Its subcellular location is the secreted. The protein is Conotoxin Fi11.11 of Conus figulinus (Fig cone).